The sequence spans 467 residues: MSLSLWQQCLARLQDELPATEFSMWIRPLQAELSDNTLALYAPNRFVLDWVRDKYLNNINGLLTSFCGADAPQLRFEVGTKPVTQTPQAAVTSNVAAPAQVAQTQPQRAAPSMRSGWDNVPAPAEPTYRSNVNVKHTFDNFVEGKSNQLARAAARQVADNPGGAYNPLFLYGGTGLGKTHLLHAVGNGIMARKPNAKVVYMHSERFVQDMVKALQNNAIEEFKRYYRSVDALLIDDIQFFANKERSQEEFFHTFNALLEGNQQIILTSDRYPKEINGVEDRLKSRFGWGLTVAIEPPELETRVAILMKKADENDIRLPGEVAFFIAKRLRSNVRELEGALNRVIANANFTGRAITIDFVREALRDLLALQEKLVTIDNIQKTVAEYYKIKVADLLSKRRSRSVARPRQMAMALAKELTNHSLPEIGDAFGGRDHTTVLHACRKIEQLREESHDIKEDFSNLIRTLSS.

The tract at residues 1–90 is domain I, interacts with DnaA modulators; that stretch reads MSLSLWQQCL…KPVTQTPQAA (90 aa). Residues 91 to 130 are domain II; it reads VTSNVAAPAQVAQTQPQRAAPSMRSGWDNVPAPAEPTYRS. The interval 131–347 is domain III, AAA+ region; that stretch reads NVNVKHTFDN…GALNRVIANA (217 aa). Gly-175, Gly-177, Lys-178, and Thr-179 together coordinate ATP. A domain IV, binds dsDNA region spans residues 348-467; sequence NFTGRAITID…FSNLIRTLSS (120 aa).

The protein belongs to the DnaA family. In terms of assembly, oligomerizes as a right-handed, spiral filament on DNA at oriC.

The protein resides in the cytoplasm. Its function is as follows. Plays an essential role in the initiation and regulation of chromosomal replication. ATP-DnaA binds to the origin of replication (oriC) to initiate formation of the DNA replication initiation complex once per cell cycle. Binds the DnaA box (a 9 base pair repeat at the origin) and separates the double-stranded (ds)DNA. Forms a right-handed helical filament on oriC DNA; dsDNA binds to the exterior of the filament while single-stranded (ss)DNA is stabiized in the filament's interior. The ATP-DnaA-oriC complex binds and stabilizes one strand of the AT-rich DNA unwinding element (DUE), permitting loading of DNA polymerase. After initiation quickly degrades to an ADP-DnaA complex that is not apt for DNA replication. Binds acidic phospholipids. The sequence is that of Chromosomal replication initiator protein DnaA from Escherichia coli (strain ATCC 8739 / DSM 1576 / NBRC 3972 / NCIMB 8545 / WDCM 00012 / Crooks).